The sequence spans 74 residues: UPF0291 protein lmo0496 (74 aa).

The protein belongs to the UPF0291 family.

It is found in the cytoplasm. The chain is UPF0291 protein lmo0496 from Listeria monocytogenes serovar 1/2a (strain ATCC BAA-679 / EGD-e).